A 160-amino-acid polypeptide reads, in one-letter code: Transcription elongation factor GreA (160 aa).

Residues 53 to 73 (AREEQGMVEARIRDIEGRLQN) are a coiled coil.

This sequence belongs to the GreA/GreB family.

Necessary for efficient RNA polymerase transcription elongation past template-encoded arresting sites. The arresting sites in DNA have the property of trapping a certain fraction of elongating RNA polymerases that pass through, resulting in locked ternary complexes. Cleavage of the nascent transcript by cleavage factors such as GreA or GreB allows the resumption of elongation from the new 3'terminus. GreA releases sequences of 2 to 3 nucleotides. This is Transcription elongation factor GreA from Pseudomonas putida (strain ATCC 47054 / DSM 6125 / CFBP 8728 / NCIMB 11950 / KT2440).